A 1064-amino-acid polypeptide reads, in one-letter code: Lysine-specific demethylase 4A (1064 aa).

A2 is modified (N-acetylalanine). The JmjN domain occupies 14 to 56; that stretch reads IMTFYPTMEEFRNFSRYIAYIESQGAHRAGLAKVVPPKEWKPR. Residue Y132 coordinates 2-oxoglutarate. A JmjC domain is found at 142-308; sequence EKHVDEWNIG…YGKQAVLCSC (167 aa). Positions 188 and 190 each coordinate Fe cation. 2-oxoglutarate contacts are provided by N198 and K206. Positions 234 and 240 each coordinate Zn(2+). K241 lines the 2-oxoglutarate pocket. H276 serves as a coordination point for Fe cation. Residues C306 and C308 each contribute to the Zn(2+) site. Residues 358–384 form a disordered region; it reads ELPPRAGNEEECPEEDMEGVEDGEEGD. Over residues 366–382 the composition is skewed to acidic residues; sequence EEECPEEDMEGVEDGEE. K471 participates in a covalent cross-link: (Microbial infection) Glycyl lysine isopeptide (Lys-Gly) (interchain with G-Cter in SUMO). Disordered regions lie at residues 501–537 and 616–641; these read FSGSKKKSSSSLGSGSSRDSISSDSETSEPLSCRAQG and SDDETSEQLTPEEEAEETEAWAKPLS. The span at 509-532 shows a compositional bias: low complexity; that stretch reads SSSLGSGSSRDSISSDSETSEPLS. Residue S523 is modified to Phosphoserine. The tract at residues 597–638 is interaction with NCOR1; the sequence is RQPLSKLPRHHPLVLQECVSDDETSEQLTPEEEAEETEAWAK. Residues 616-634 show a composition bias toward acidic residues; it reads SDDETSEQLTPEEEAEETE. The PHD-type 1 zinc-finger motif lies at 709–767; it reads MCFTSTGCSTDINLSTPYLEEDGTSILVSCKKCSVRVHASCYGVPPAKASEDWMCSRCS. Residues 772-805 form a C2HC pre-PHD-type zinc finger; that stretch reads EEDCCLCSLRGGALQRANDDRWVHVSCAVAILEA. The segment at 828 to 885 adopts a PHD-type 2 zinc-finger fold; that stretch reads LKCIFCKKRRKRTAGCCVQCSHGRCPTAFHVSCAQAAGVMMQPDDWPFVVFITCFRHK. Tudor domains are found at residues 897 to 954 and 955 to 1011; these read QSIT…CLQF and GPPA…EELP.

It belongs to the JHDM3 histone demethylase family. Interacts with histone deacetylase proteins HDAC1, HDAC2 and HDAC3. Interacts with RB and NCOR1. Interacts with VRK1. Interacts with FBXO22; this interaction promotes KDM4A ubiquitination. As to quaternary structure, (Microbial infection) Interacts with HTLV-1 Tax protein. Fe(2+) serves as cofactor. In terms of processing, (Microbial infection) SUMOylated by human herpesvirus 8 E3 SUMO-protein ligase K-bZIP/K8 at Lys-471; thereby modulating the chromatin binding and histone demethylase activity of KDM4A. Ubiquitinated by RNF8 and RNF168 following DNA damage, leading to its degradation. Degradation promotes accessibility of H4K20me2 mark for DNA repair protein TP53BP1, which is then recruited. Also ubiquitinated by the SCF(FBXO22) complex; leading to proteasomal degradation. Ubiquitous.

It is found in the nucleus. It carries out the reaction N(6),N(6),N(6)-trimethyl-L-lysyl(9)-[histone H3] + 2 2-oxoglutarate + 2 O2 = N(6)-methyl-L-lysyl(9)-[histone H3] + 2 formaldehyde + 2 succinate + 2 CO2. The catalysed reaction is N(6),N(6),N(6)-trimethyl-L-lysyl(36)-[histone H3] + 2 2-oxoglutarate + 2 O2 = N(6)-methyl-L-lysyl(36)-[histone H3] + 2 formaldehyde + 2 succinate + 2 CO2. With respect to regulation, several specific inhibitors are being developed and tested. Its function is as follows. Histone demethylase that specifically demethylates 'Lys-9' and 'Lys-36' residues of histone H3, thereby playing a central role in histone code. Does not demethylate histone H3 'Lys-4', H3 'Lys-27' nor H4 'Lys-20'. Demethylates trimethylated H3 'Lys-9' and H3 'Lys-36' residue, while it has no activity on mono- and dimethylated residues. Demethylation of Lys residue generates formaldehyde and succinate. Participates in transcriptional repression of ASCL2 and E2F-responsive promoters via the recruitment of histone deacetylases and NCOR1, respectively. Functionally, crucial for muscle differentiation, promotes transcriptional activation of the Myog gene by directing the removal of repressive chromatin marks at its promoter. Lacks the N-terminal demethylase domain. The sequence is that of Lysine-specific demethylase 4A (KDM4A) from Homo sapiens (Human).